We begin with the raw amino-acid sequence, 200 residues long: NADH-quinone oxidoreductase subunit C (200 aa).

The protein belongs to the complex I 30 kDa subunit family. As to quaternary structure, NDH-1 is composed of 14 different subunits. Subunits NuoB, C, D, E, F, and G constitute the peripheral sector of the complex.

Its subcellular location is the cell inner membrane. The enzyme catalyses a quinone + NADH + 5 H(+)(in) = a quinol + NAD(+) + 4 H(+)(out). Functionally, NDH-1 shuttles electrons from NADH, via FMN and iron-sulfur (Fe-S) centers, to quinones in the respiratory chain. The immediate electron acceptor for the enzyme in this species is believed to be ubiquinone. Couples the redox reaction to proton translocation (for every two electrons transferred, four hydrogen ions are translocated across the cytoplasmic membrane), and thus conserves the redox energy in a proton gradient. The chain is NADH-quinone oxidoreductase subunit C from Burkholderia vietnamiensis (strain G4 / LMG 22486) (Burkholderia cepacia (strain R1808)).